The following is a 299-amino-acid chain: Oxygen-dependent coproporphyrinogen-III oxidase (299 aa).

Ser-92 is a substrate binding site. A divalent metal cation contacts are provided by His-96 and His-106. His-106 acts as the Proton donor in catalysis. 108–110 (NVR) lines the substrate pocket. Residues His-145 and His-175 each contribute to the a divalent metal cation site. Residues 240-275 (YVEFNLVWDRGTLFGLQTGGRTESILMSMPPLVRWE) form an important for dimerization region. Position 258-260 (258-260 (GGR)) interacts with substrate.

This sequence belongs to the aerobic coproporphyrinogen-III oxidase family. In terms of assembly, homodimer. It depends on a divalent metal cation as a cofactor.

It is found in the cytoplasm. It catalyses the reaction coproporphyrinogen III + O2 + 2 H(+) = protoporphyrinogen IX + 2 CO2 + 2 H2O. It participates in porphyrin-containing compound metabolism; protoporphyrin-IX biosynthesis; protoporphyrinogen-IX from coproporphyrinogen-III (O2 route): step 1/1. Its function is as follows. Involved in the heme biosynthesis. Catalyzes the aerobic oxidative decarboxylation of propionate groups of rings A and B of coproporphyrinogen-III to yield the vinyl groups in protoporphyrinogen-IX. This is Oxygen-dependent coproporphyrinogen-III oxidase from Enterobacter sp. (strain 638).